We begin with the raw amino-acid sequence, 162 residues long: Peroxiredoxin-2C (162 aa).

The Thioredoxin domain occupies 4–162 (VAVGDTLPDG…SGAEEILKAL (159 aa)). The active-site Cysteine sulfenic acid (-SOH) intermediate is C51.

This sequence belongs to the peroxiredoxin family. Prx5 subfamily. As to quaternary structure, monomer.

Its subcellular location is the cytoplasm. It carries out the reaction [glutaredoxin]-dithiol + a hydroperoxide = [glutaredoxin]-disulfide + an alcohol + H2O. Reduces hydrogen peroxide and alkyl hydroperoxides with reducing equivalents provided through the thioredoxin or glutaredoxin system. May be involved in intracellular redox signaling. In terms of biological role, thiol-specific peroxidase that catalyzes the reduction of hydrogen peroxide and organic hydroperoxides to water and alcohols, respectively. Plays a role in cell protection against oxidative stress by detoxifying peroxides. The sequence is that of Peroxiredoxin-2C (PRXIIC) from Oryza sativa subsp. japonica (Rice).